Here is a 1402-residue protein sequence, read N- to C-terminus: DNA-directed RNA polymerase subunit beta' (1402 aa).

4 residues coordinate Zn(2+): cysteine 72, cysteine 74, cysteine 87, and cysteine 90. Positions 463, 465, and 467 each coordinate Mg(2+). Residues cysteine 811, cysteine 885, cysteine 892, and cysteine 895 each coordinate Zn(2+).

Belongs to the RNA polymerase beta' chain family. In terms of assembly, the RNAP catalytic core consists of 2 alpha, 1 beta, 1 beta' and 1 omega subunit. When a sigma factor is associated with the core the holoenzyme is formed, which can initiate transcription. Mg(2+) serves as cofactor. It depends on Zn(2+) as a cofactor.

It catalyses the reaction RNA(n) + a ribonucleoside 5'-triphosphate = RNA(n+1) + diphosphate. In terms of biological role, DNA-dependent RNA polymerase catalyzes the transcription of DNA into RNA using the four ribonucleoside triphosphates as substrates. This chain is DNA-directed RNA polymerase subunit beta', found in Paracoccus denitrificans (strain Pd 1222).